The chain runs to 152 residues: RxLR effector protein Avrblb1 (152 aa).

An N-terminal signal peptide occupies residues 1–24 (MRSLLLTVLLNLVVLLATTGAVSS). The short motif at 51–72 (RSLRGDYNNEVTKEPNTSDEER) is the RxLR-dEER element. Positions 54–56 (RGD) match the RGD RLK-binding motif motif. A glycan (N-linked (GlcNAc...) asparagine) is linked at asparagine 66. Residues 99 to 152 (QSKTVLRYEDKLFTALYKSGETPRSLRTKHLDKASASVFFNRFKKWYDKNVGPS) are w motif.

This sequence belongs to the RxLR effector family. As to quaternary structure, interacts with host defense protein RGA2/Rpi-blb1. Interacts with host legume-type lectin receptor kinase LECRK19.

The protein resides in the secreted. The protein localises to the host nucleus. It localises to the host nucleolus. It is found in the host cell membrane. Its function is as follows. Secreted effector that acts as an elicitor of hypersensitive response (HR) specifically on plants carrying defense protein RGA2/Rpi-blb1. Enhances P.infestans colonization of plant hosts Nicotiana benthamiana and potato Solanum bulbocastanum leaves. Associates with host legume-type lectin receptor kinases and disrupts attachments between the host plasma membrane and cell wall. The protein is RxLR effector protein Avrblb1 of Phytophthora infestans (strain T30-4) (Potato late blight agent).